The primary structure comprises 433 residues: Phosphomethylpyrimidine synthase (433 aa).

Substrate-binding positions include Asn66, Met94, Tyr123, His162, 184 to 186 (SRG), 225 to 228 (DALR), and Glu264. His268 contributes to the Zn(2+) binding site. Tyr291 is a binding site for substrate. His332 contacts Zn(2+). 3 residues coordinate [4Fe-4S] cluster: Cys408, Cys411, and Cys415.

It belongs to the ThiC family. [4Fe-4S] cluster serves as cofactor.

The catalysed reaction is 5-amino-1-(5-phospho-beta-D-ribosyl)imidazole + S-adenosyl-L-methionine = 4-amino-2-methyl-5-(phosphooxymethyl)pyrimidine + CO + 5'-deoxyadenosine + formate + L-methionine + 3 H(+). The protein operates within cofactor biosynthesis; thiamine diphosphate biosynthesis. Functionally, catalyzes the synthesis of the hydroxymethylpyrimidine phosphate (HMP-P) moiety of thiamine from aminoimidazole ribotide (AIR) in a radical S-adenosyl-L-methionine (SAM)-dependent reaction. In Saccharolobus islandicus (strain M.16.27) (Sulfolobus islandicus), this protein is Phosphomethylpyrimidine synthase.